We begin with the raw amino-acid sequence, 375 residues long: Actin-related protein T1 (375 aa).

This sequence belongs to the actin family.

The protein localises to the cytoplasm. It localises to the cytoskeleton. It is found in the nucleus. Its subcellular location is the cytoplasmic vesicle. The protein resides in the secretory vesicle. The protein localises to the acrosome. Functionally, negatively regulates the Hedgehog (SHH) signaling. Binds to the promoter of the SHH signaling mediator, GLI1, and inhibits its expression. This Macaca fascicularis (Crab-eating macaque) protein is Actin-related protein T1 (ACTRT1).